A 568-amino-acid chain; its full sequence is bZIP transcription factor 60 (568 aa).

Low complexity-rich tracts occupy residues Met-1–Leu-13 and Thr-60–Ala-78. Disordered regions lie at residues Met-1–Asp-29 and Asp-45–Gln-134. Residues Met-1 to Lys-240 are Cytoplasmic-facing. Residues Gly-103–Lys-113 show a composition bias toward basic and acidic residues. The bZIP domain maps to Glu-111–Leu-171. The basic motif stretch occupies residues Lys-113–Lys-144. The interval Ile-150–Ile-157 is leucine-zipper. A helical transmembrane segment spans residues Val-241–Pro-261. At Ala-262–Leu-568 the chain is on the lumenal side. 5 N-linked (GlcNAc...) asparagine glycosylation sites follow: Asn-307, Asn-452, Asn-456, Asn-488, and Asn-499. The disordered stretch occupies residues Ala-479–Val-510.

The protein belongs to the bZIP family.

Its subcellular location is the endoplasmic reticulum membrane. The protein localises to the nucleus. Functionally, transcription factor involved in endoplasmic reticulum (ER) stress response. Acts as a ER stress sensor and activates the transcription factor BZIP50 and the chaperone BIP1. The protein is bZIP transcription factor 60 of Oryza sativa subsp. japonica (Rice).